Reading from the N-terminus, the 102-residue chain is uncharacterized protein (102 aa).

Positions 1-41 are cleaved as a signal peptide; it reads MLFLDSYSLLIQFQRFKNWESPRRFSSSFPLLLFVFKPIFA.

This is an uncharacterized protein from Saccharomyces cerevisiae (strain ATCC 204508 / S288c) (Baker's yeast).